We begin with the raw amino-acid sequence, 465 residues long: Probable tRNA modification GTPase MnmE (465 aa).

(6S)-5-formyl-5,6,7,8-tetrahydrofolate-binding residues include arginine 23, glutamate 85, and arginine 124. In terms of domain architecture, TrmE-type G spans 221–384 (GTKVCIIGKP…LNNCILDLSS (164 aa)). Residues 231-236 (NVGKSS), 250-256 (TNFPGTT), and 275-278 (DTAG) contribute to the GTP site. The Mg(2+) site is built by serine 235 and threonine 256. Residue lysine 465 coordinates (6S)-5-formyl-5,6,7,8-tetrahydrofolate.

It belongs to the TRAFAC class TrmE-Era-EngA-EngB-Septin-like GTPase superfamily. TrmE GTPase family. Requires K(+) as cofactor.

The protein resides in the plastid. Its subcellular location is the chloroplast. Exhibits a very high intrinsic GTPase hydrolysis rate. Involved in the addition of a carboxymethylaminomethyl (cmnm) group at the wobble position (U34) of certain tRNAs, forming tRNA-cmnm(5)s(2)U34. The sequence is that of Probable tRNA modification GTPase MnmE from Cyanidium caldarium (Red alga).